Here is a 55-residue protein sequence, read N- to C-terminus: Methylmalonyl-CoA decarboxylase subunit epsilon (55 aa).

In terms of assembly, the methylmalonyl-CoA decarboxylase is composed of five subunits: the carboxyltransferase alpha subunit (MmdA), the tunnel beta subunit (MmdB), the biotin-containing gamma subunit (MmdC), and the delta (MmdD) and epsilon (MmdE) subunits.

The protein resides in the cell membrane. The enzyme catalyses (S)-methylmalonyl-CoA + Na(+)(in) + H(+)(out) = propanoyl-CoA + Na(+)(out) + CO2. Its activity is regulated as follows. Completely inhibited by avidin. Functionally, subunit of the sodium ion pump methylmalonyl-CoA decarboxylase, which converts the chemical energy of a decarboxylation reaction into an electrochemical gradient of Na(+) ions across the cytoplasmic membrane, thereby creating a sodium ion motive force that is used for ATP synthesis. The epsilon subunit seems not important for the catalysis of either decarboxylation or Na(+) transport, but it improves binding of the alpha subunit and plays an important role in stabilizing the methylmalonyl-CoA-decarboxylase enzyme complex. Can also convert malonyl-CoA into acetyl-CoA. This is Methylmalonyl-CoA decarboxylase subunit epsilon from Veillonella parvula (Staphylococcus parvulus).